The sequence spans 534 residues: CTP synthase (534 aa).

Residues 1–265 are amidoligase domain; the sequence is MKYIIVTGGV…SNYLLKKLIL (265 aa). Position 12 (Ser12) interacts with CTP. Ser12 provides a ligand contact to UTP. 13–18 provides a ligand contact to ATP; the sequence is GLGKGI. Tyr53 contacts L-glutamine. Asp70 is a binding site for ATP. Mg(2+)-binding residues include Asp70 and Glu140. Residues 147–149, 186–191, and Lys222 each bind CTP; these read DIE and KTKPTQ. Residues 186-191 and Lys222 contribute to the UTP site; that span reads KTKPTQ. Residues 289–530 enclose the Glutamine amidotransferase type-1 domain; the sequence is NVAIVGKYTH…MGAMLKKSKE (242 aa). Gly352 lines the L-glutamine pocket. Cys379 serves as the catalytic Nucleophile; for glutamine hydrolysis. L-glutamine contacts are provided by residues 380-383, Glu403, and Arg460; that span reads LGMQ. Residues His503 and Glu505 contribute to the active site.

This sequence belongs to the CTP synthase family. As to quaternary structure, homotetramer.

The catalysed reaction is UTP + L-glutamine + ATP + H2O = CTP + L-glutamate + ADP + phosphate + 2 H(+). It carries out the reaction L-glutamine + H2O = L-glutamate + NH4(+). It catalyses the reaction UTP + NH4(+) + ATP = CTP + ADP + phosphate + 2 H(+). It functions in the pathway pyrimidine metabolism; CTP biosynthesis via de novo pathway; CTP from UDP: step 2/2. Allosterically activated by GTP, when glutamine is the substrate; GTP has no effect on the reaction when ammonia is the substrate. The allosteric effector GTP functions by stabilizing the protein conformation that binds the tetrahedral intermediate(s) formed during glutamine hydrolysis. Inhibited by the product CTP, via allosteric rather than competitive inhibition. Catalyzes the ATP-dependent amination of UTP to CTP with either L-glutamine or ammonia as the source of nitrogen. Regulates intracellular CTP levels through interactions with the four ribonucleotide triphosphates. This Methanococcoides burtonii (strain DSM 6242 / NBRC 107633 / OCM 468 / ACE-M) protein is CTP synthase.